Reading from the N-terminus, the 998-residue chain is Mediator of RNA polymerase II transcription subunit 14 (998 aa).

Belongs to the Mediator complex subunit 14 family. In terms of assembly, component of the Mediator complex.

The protein resides in the nucleus. In terms of biological role, component of the Mediator complex, a coactivator involved in the regulated transcription of nearly all RNA polymerase II-dependent genes. Mediator functions as a bridge to convey information from gene-specific regulatory proteins to the basal RNA polymerase II transcription machinery. Mediator is recruited to promoters by direct interactions with regulatory proteins and serves as a scaffold for the assembly of a functional preinitiation complex with RNA polymerase II and the general transcription factors. This Kluyveromyces lactis (strain ATCC 8585 / CBS 2359 / DSM 70799 / NBRC 1267 / NRRL Y-1140 / WM37) (Yeast) protein is Mediator of RNA polymerase II transcription subunit 14 (RGR1).